Consider the following 739-residue polypeptide: Catalase-peroxidase 2 (739 aa).

An N-terminal signal peptide occupies residues 1-26 (MKKSTIPSMSALTLAMSLAFGGAAIA). Residues 105-227 (WHSAGVYRIF…MGATQMGLIY (123 aa)) constitute a cross-link (tryptophyl-tyrosyl-methioninium (Trp-Tyr) (with M-253)). Catalysis depends on His106, which acts as the Proton acceptor. The tryptophyl-tyrosyl-methioninium (Tyr-Met) (with W-105) cross-link spans 227–253 (YVNPEGPNGVPDPLASAKEIRDTFGRM). His268 serves as a coordination point for heme b.

Belongs to the peroxidase family. Peroxidase/catalase subfamily. Homodimer or homotetramer. The cofactor is heme b. Formation of the three residue Trp-Tyr-Met cross-link is important for the catalase, but not the peroxidase activity of the enzyme.

The enzyme catalyses H2O2 + AH2 = A + 2 H2O. The catalysed reaction is 2 H2O2 = O2 + 2 H2O. Its function is as follows. Bifunctional enzyme with both catalase and broad-spectrum peroxidase activity. This Shewanella sp. (strain ANA-3) protein is Catalase-peroxidase 2.